A 119-amino-acid polypeptide reads, in one-letter code: Protein phosphatase EYA3 (119 aa).

Belongs to the HAD-like hydrolase superfamily. EYA family. Requires Mg(2+) as cofactor.

It localises to the cytoplasm. Its subcellular location is the nucleus. It carries out the reaction O-phospho-L-tyrosyl-[protein] + H2O = L-tyrosyl-[protein] + phosphate. Functionally, tyrosine phosphatase that specifically dephosphorylates 'Tyr-142' of histone H2AX (H2AXY142ph). 'Tyr-142' phosphorylation of histone H2AX plays a central role in DNA repair and acts as a mark that distinguishes between apoptotic and repair responses to genotoxic stress. Promotes efficient DNA repair by dephosphorylating H2AX, promoting the recruitment of DNA repair complexes containing MDC1. Its function as histone phosphatase probably explains its role in transcription regulation during organogenesis. May be involved in development of the eye. The polypeptide is Protein phosphatase EYA3 (EYA3) (Gallus gallus (Chicken)).